The chain runs to 344 residues: L-threonine 3-dehydrogenase (344 aa).

Cys42 lines the Zn(2+) pocket. Active-site charge relay system residues include Thr44 and His47. Residues His67, Glu68, Cys97, Cys100, Cys103, and Cys111 each coordinate Zn(2+). NAD(+) is bound by residues Ile179, Asp199, Arg204, 266-268 (LGI), and 290-291 (IY).

The protein belongs to the zinc-containing alcohol dehydrogenase family. As to quaternary structure, homotetramer. It depends on Zn(2+) as a cofactor.

The protein localises to the cytoplasm. It carries out the reaction L-threonine + NAD(+) = (2S)-2-amino-3-oxobutanoate + NADH + H(+). Its pathway is amino-acid degradation; L-threonine degradation via oxydo-reductase pathway; glycine from L-threonine: step 1/2. In terms of biological role, catalyzes the NAD(+)-dependent oxidation of L-threonine to 2-amino-3-ketobutyrate. This chain is L-threonine 3-dehydrogenase, found in Sinorhizobium medicae (strain WSM419) (Ensifer medicae).